We begin with the raw amino-acid sequence, 604 residues long: Putative O-acetyltransferase SACOL0978 (604 aa).

11 consecutive transmembrane segments (helical) span residues Y15–L35, G43–L63, L85–S105, A150–I170, I176–S196, L212–N232, Y240–I260, I267–V287, Y310–G330, I332–Y352, and F377–A397. Catalysis depends on residues S459, D581, and H584.

This sequence belongs to the acyltransferase 3 family.

It is found in the cell membrane. This is Putative O-acetyltransferase SACOL0978 from Staphylococcus aureus (strain COL).